A 275-amino-acid polypeptide reads, in one-letter code: Uronate dehydrogenase (275 aa).

Residues 22-23, 42-44, 60-61, and 80-84 each bind NAD(+); these read GL, DIA, DL, and FGGVS. Residues S84 and 120 to 122 each bind substrate; that span reads SNH. Y145 functions as the Proton acceptor in the catalytic mechanism. K149 lines the NAD(+) pocket. S174 contacts substrate. S175 provides a ligand contact to NAD(+). R183 is a substrate binding site.

The protein belongs to the NAD(P)-dependent epimerase/dehydratase family. In terms of assembly, homohexamer.

The catalysed reaction is beta-D-galacturonate + NAD(+) = D-galactaro-1,5-lactone + NADH + H(+). It carries out the reaction beta-D-glucuronate + NAD(+) = D-glucaro-1,5-lactone + NADH + H(+). The protein operates within carbohydrate acid metabolism; D-galacturonate degradation via prokaryotic oxidative pathway. Functionally, catalyzes the oxidation of beta-D-galacturonate and beta-D-glucuronate to galactarate and D-glucarate, respectively. Cannot use NADP(+) instead of NAD(+) as cosubstrate. This Pseudomonas syringae pv. tomato (strain ATCC BAA-871 / DC3000) protein is Uronate dehydrogenase (udh).